We begin with the raw amino-acid sequence, 263 residues long: Phosphoinositide-3-kinase-interacting protein 1 (263 aa).

Residues 1–21 (MLLAWVQAFLVSNMLLAEAYG) form the signal peptide. Topologically, residues 22–168 (SGGCFWDNGH…NSKEKKDLGT (147 aa)) are extracellular. One can recognise a Kringle domain in the interval 24 to 101 (GCFWDNGHLY…EKRPCEDLRC (78 aa)). Intrachain disulfides connect cysteine 25–cysteine 101, cysteine 46–cysteine 82, and cysteine 70–cysteine 96. Serine 39 carries O-linked (GalNAc...) serine glycosylation. Residue asparagine 66 is glycosylated (N-linked (GlcNAc...) (complex) asparagine). Residues 169–189 (LGYVLGITMMVIIIAIGAGII) form a helical membrane-spanning segment. Residues 190-263 (LGYSYKRGKD…LMGQAGTPGA (74 aa)) are Cytoplasmic-facing. Residues 242–251 (QTPVDPQEGT) show a composition bias toward polar residues. Residues 242–263 (QTPVDPQEGTTPLMGQAGTPGA) are disordered.

Post-translationally, N- and O-glycosylated. O-glycosylated with core 1 or possibly core 8 glycans. N-glycan heterogeneity at Asn-66: dHex1Hex5HexNAc4 (major) and dHex1Hex6HexNAc5 (minor).

The protein localises to the cell membrane. In terms of biological role, negative regulator of hepatic phosphatidylinositol 3-kinase (PI3K) activity. The sequence is that of Phosphoinositide-3-kinase-interacting protein 1 (PIK3IP1) from Homo sapiens (Human).